A 388-amino-acid chain; its full sequence is 1D-myo-inositol 2-acetamido-2-deoxy-alpha-D-glucopyranoside deacetylase (388 aa).

The Zn(2+) site is built by H6, D9, and H144. The disordered stretch occupies residues 369–388 (LDQADEGAAHDTSEQSGQRR).

This sequence belongs to the MshB deacetylase family. It depends on Zn(2+) as a cofactor.

It carries out the reaction 1D-myo-inositol 2-acetamido-2-deoxy-alpha-D-glucopyranoside + H2O = 1D-myo-inositol 2-amino-2-deoxy-alpha-D-glucopyranoside + acetate. Functionally, catalyzes the deacetylation of 1D-myo-inositol 2-acetamido-2-deoxy-alpha-D-glucopyranoside (GlcNAc-Ins) in the mycothiol biosynthesis pathway. The polypeptide is 1D-myo-inositol 2-acetamido-2-deoxy-alpha-D-glucopyranoside deacetylase (Corynebacterium kroppenstedtii (strain DSM 44385 / JCM 11950 / CIP 105744 / CCUG 35717)).